The following is a 522-amino-acid chain: Hydroxymethylglutaryl-CoA synthase, cytoplasmic (522 aa).

Positions 43 and 44 each coordinate (3S)-3-hydroxy-3-methylglutaryl-CoA. The Proton donor/acceptor role is filled by Glu-95. Residues Cys-129, Asn-167, Thr-171, Ser-221, His-264, Lys-273, Asn-344, and Ser-378 each coordinate (3S)-3-hydroxy-3-methylglutaryl-CoA. The active-site Acyl-thioester intermediate is the Cys-129. The active-site Proton donor/acceptor is His-264.

This sequence belongs to the thiolase-like superfamily. HMG-CoA synthase family. As to quaternary structure, homodimer.

The protein localises to the cytoplasm. It catalyses the reaction acetoacetyl-CoA + acetyl-CoA + H2O = (3S)-3-hydroxy-3-methylglutaryl-CoA + CoA + H(+). The protein operates within metabolic intermediate biosynthesis; (R)-mevalonate biosynthesis; (R)-mevalonate from acetyl-CoA: step 2/3. Its function is as follows. Catalyzes the condensation of acetyl-CoA with acetoacetyl-CoA to form HMG-CoA, which is converted by HMG-CoA reductase (HMGCR) into mevalonate, a precursor for cholesterol synthesis. In Gallus gallus (Chicken), this protein is Hydroxymethylglutaryl-CoA synthase, cytoplasmic (HMGCS1).